The following is a 138-amino-acid chain: Putative pre-16S rRNA nuclease (138 aa).

The protein belongs to the YqgF nuclease family.

Its subcellular location is the cytoplasm. In terms of biological role, could be a nuclease involved in processing of the 5'-end of pre-16S rRNA. The chain is Putative pre-16S rRNA nuclease from Salmonella arizonae (strain ATCC BAA-731 / CDC346-86 / RSK2980).